The chain runs to 202 residues: Cytochrome c oxidase assembly protein CtaG (202 aa).

The Cytoplasmic portion of the chain corresponds to 1–13 (MSDKAAAPKKQGR). The helical; Signal-anchor for type II membrane protein transmembrane segment at 14–36 (NNGAVVLMCLSFVFGMGAMSYAA) threads the bilayer. The Periplasmic portion of the chain corresponds to 37 to 202 (VPLYRIFCQV…GGAEKVEKKL (166 aa)). Positions 183–202 (EGPKPLASNEGGAEKVEKKL) are disordered.

Belongs to the COX11/CtaG family.

The protein localises to the cell inner membrane. Exerts its effect at some terminal stage of cytochrome c oxidase synthesis, probably by being involved in the insertion of the copper B into subunit I. The sequence is that of Cytochrome c oxidase assembly protein CtaG from Rhizobium etli (strain CIAT 652).